The following is a 360-amino-acid chain: Phospho-N-acetylmuramoyl-pentapeptide-transferase (360 aa).

10 consecutive transmembrane segments (helical) span residues 21-41 (YLTF…LWIG), 71-91 (TPTM…ILWA), 94-114 (SNPY…IGFI), 142-162 (LVVA…VLVV), 168-188 (IMPQ…VGAS), 199-219 (GLAI…AWAT), 236-256 (ASEL…FLWF), 263-283 (VFMG…IAVL), 288-308 (FLLF…ILQV), and 338-358 (VIVR…VTLK).

Belongs to the glycosyltransferase 4 family. MraY subfamily. Requires Mg(2+) as cofactor.

It localises to the cell inner membrane. The enzyme catalyses UDP-N-acetyl-alpha-D-muramoyl-L-alanyl-gamma-D-glutamyl-meso-2,6-diaminopimeloyl-D-alanyl-D-alanine + di-trans,octa-cis-undecaprenyl phosphate = di-trans,octa-cis-undecaprenyl diphospho-N-acetyl-alpha-D-muramoyl-L-alanyl-D-glutamyl-meso-2,6-diaminopimeloyl-D-alanyl-D-alanine + UMP. It functions in the pathway cell wall biogenesis; peptidoglycan biosynthesis. Catalyzes the initial step of the lipid cycle reactions in the biosynthesis of the cell wall peptidoglycan: transfers peptidoglycan precursor phospho-MurNAc-pentapeptide from UDP-MurNAc-pentapeptide onto the lipid carrier undecaprenyl phosphate, yielding undecaprenyl-pyrophosphoryl-MurNAc-pentapeptide, known as lipid I. The sequence is that of Phospho-N-acetylmuramoyl-pentapeptide-transferase from Tolumonas auensis (strain DSM 9187 / NBRC 110442 / TA 4).